Consider the following 195-residue polypeptide: NADH-quinone oxidoreductase subunit B (195 aa).

Residues cysteine 74, cysteine 75, cysteine 139, and cysteine 169 each coordinate [4Fe-4S] cluster.

It belongs to the complex I 20 kDa subunit family. In terms of assembly, NDH-1 is composed of 14 different subunits. Subunits NuoB, C, D, E, F, and G constitute the peripheral sector of the complex. It depends on [4Fe-4S] cluster as a cofactor.

Its subcellular location is the cell inner membrane. The catalysed reaction is a quinone + NADH + 5 H(+)(in) = a quinol + NAD(+) + 4 H(+)(out). Functionally, NDH-1 shuttles electrons from NADH, via FMN and iron-sulfur (Fe-S) centers, to quinones in the respiratory chain. The immediate electron acceptor for the enzyme in this species is believed to be ubiquinone. Couples the redox reaction to proton translocation (for every two electrons transferred, four hydrogen ions are translocated across the cytoplasmic membrane), and thus conserves the redox energy in a proton gradient. The polypeptide is NADH-quinone oxidoreductase subunit B (Methylorubrum populi (strain ATCC BAA-705 / NCIMB 13946 / BJ001) (Methylobacterium populi)).